The following is a 136-amino-acid chain: Large ribosomal subunit protein uL16 (136 aa).

The protein belongs to the universal ribosomal protein uL16 family. As to quaternary structure, part of the 50S ribosomal subunit.

Its function is as follows. Binds 23S rRNA and is also seen to make contacts with the A and possibly P site tRNAs. The chain is Large ribosomal subunit protein uL16 from Pectobacterium atrosepticum (strain SCRI 1043 / ATCC BAA-672) (Erwinia carotovora subsp. atroseptica).